A 195-amino-acid chain; its full sequence is Imidazoleglycerol-phosphate dehydratase (195 aa).

It belongs to the imidazoleglycerol-phosphate dehydratase family.

It is found in the cytoplasm. It carries out the reaction D-erythro-1-(imidazol-4-yl)glycerol 3-phosphate = 3-(imidazol-4-yl)-2-oxopropyl phosphate + H2O. It functions in the pathway amino-acid biosynthesis; L-histidine biosynthesis; L-histidine from 5-phospho-alpha-D-ribose 1-diphosphate: step 6/9. The polypeptide is Imidazoleglycerol-phosphate dehydratase (Thermotoga maritima (strain ATCC 43589 / DSM 3109 / JCM 10099 / NBRC 100826 / MSB8)).